The following is a 323-amino-acid chain: tRNA U34 carboxymethyltransferase (323 aa).

Carboxy-S-adenosyl-L-methionine-binding positions include Lys-91, Trp-105, Lys-110, Gly-130, 152–154 (DPT), 181–182 (IE), Met-196, Tyr-200, and Arg-315.

This sequence belongs to the class I-like SAM-binding methyltransferase superfamily. CmoB family. As to quaternary structure, homotetramer.

The enzyme catalyses carboxy-S-adenosyl-L-methionine + 5-hydroxyuridine(34) in tRNA = 5-carboxymethoxyuridine(34) in tRNA + S-adenosyl-L-homocysteine + H(+). Functionally, catalyzes carboxymethyl transfer from carboxy-S-adenosyl-L-methionine (Cx-SAM) to 5-hydroxyuridine (ho5U) to form 5-carboxymethoxyuridine (cmo5U) at position 34 in tRNAs. The polypeptide is tRNA U34 carboxymethyltransferase (Escherichia coli O139:H28 (strain E24377A / ETEC)).